A 526-amino-acid chain; its full sequence is Acetyl-CoA hydrolase (526 aa).

Threonine 2 carries the N-acetylthreonine modification. 277–281 (GIGNI) serves as a coordination point for CoA. Residue glutamate 302 is the 5-glutamyl coenzyme A thioester intermediate of the active site. The residue at position 350 (serine 350) is a Phosphoserine. CoA-binding residues include asparagine 392 and glycine 396.

This sequence belongs to the acetyl-CoA hydrolase/transferase family. In terms of assembly, monomer. In terms of processing, glycosylated; contains mannose.

It localises to the cytoplasm. It catalyses the reaction acetyl-CoA + H2O = acetate + CoA + H(+). In terms of biological role, presumably involved in regulating the intracellular acetyl-CoA pool for fatty acid and cholesterol synthesis and fatty acid oxidation. It may be involved in overall regulation of acetylation during melatonin synthesis. This Saccharomyces cerevisiae (strain ATCC 204508 / S288c) (Baker's yeast) protein is Acetyl-CoA hydrolase (ACH1).